The primary structure comprises 147 residues: Peptide deformylase (147 aa).

Fe cation contacts are provided by Cys88 and His130. Glu131 is a catalytic residue. Position 134 (His134) interacts with Fe cation.

The protein belongs to the polypeptide deformylase family. It depends on Fe(2+) as a cofactor.

The catalysed reaction is N-terminal N-formyl-L-methionyl-[peptide] + H2O = N-terminal L-methionyl-[peptide] + formate. Its function is as follows. Removes the formyl group from the N-terminal Met of newly synthesized proteins. Requires at least a dipeptide for an efficient rate of reaction. N-terminal L-methionine is a prerequisite for activity but the enzyme has broad specificity at other positions. The polypeptide is Peptide deformylase (Alkaliphilus metalliredigens (strain QYMF)).